Here is a 522-residue protein sequence, read N- to C-terminus: Ribonuclease Y (522 aa).

The helical transmembrane segment at 7 to 23 (SGSSAAVISGLVGFYIS) threads the bilayer. In terms of domain architecture, KH spans 212–278 (LTNLVHLNDD…TKTLELLIQD (67 aa)). An HD domain is found at 338–431 (ALSHTLEVAH…VCAADALSAA (94 aa)).

Belongs to the RNase Y family.

The protein localises to the cell membrane. Its function is as follows. Endoribonuclease that initiates mRNA decay. In Sulfurimonas denitrificans (strain ATCC 33889 / DSM 1251) (Thiomicrospira denitrificans (strain ATCC 33889 / DSM 1251)), this protein is Ribonuclease Y.